The following is a 508-amino-acid chain: Ribose import ATP-binding protein RbsA 2 (508 aa).

ABC transporter domains lie at 6–241 (LTIH…VGRE) and 254–499 (ERSG…SGMG). 38–45 (GENGAGKS) lines the ATP pocket.

This sequence belongs to the ABC transporter superfamily. Ribose importer (TC 3.A.1.2.1) family. In terms of assembly, the complex is composed of an ATP-binding protein (RbsA), two transmembrane proteins (RbsC) and a solute-binding protein (RbsB).

The protein localises to the cell inner membrane. The catalysed reaction is D-ribose(out) + ATP + H2O = D-ribose(in) + ADP + phosphate + H(+). Part of the ABC transporter complex RbsABC involved in ribose import. Responsible for energy coupling to the transport system. The chain is Ribose import ATP-binding protein RbsA 2 from Rhizobium etli (strain ATCC 51251 / DSM 11541 / JCM 21823 / NBRC 15573 / CFN 42).